A 387-amino-acid polypeptide reads, in one-letter code: Small ribosomal subunit protein mS31 (387 aa).

The transit peptide at 1–56 directs the protein to the mitochondrion; that stretch reads MLHRIPAFIRPRPFSGLPLSCGNREVSVAASVLPAAGSGAVRTENTIQRHFCTSRS. Disordered stretches follow at residues 59 to 83 and 203 to 228; these read SKKD…GEGK and KSPS…SSLS. Polar residues-rich tracts occupy residues 66–76 and 207–217; these read VPANETSQKAA and MRVSSRPQHQI.

This sequence belongs to the mitochondrion-specific ribosomal protein mS31 family. As to quaternary structure, component of the mitochondrial ribosome small subunit (28S) which comprises a 12S rRNA and about 30 distinct proteins.

The protein resides in the mitochondrion. In Rattus norvegicus (Rat), this protein is Small ribosomal subunit protein mS31 (Mrps31).